We begin with the raw amino-acid sequence, 352 residues long: Biotin synthase (352 aa).

A Radical SAM core domain is found at 44–262 (NRVQVSTLLS…LAVARILMPK (219 aa)). [4Fe-4S] cluster-binding residues include Cys-59, Cys-63, and Cys-66. [2Fe-2S] cluster-binding residues include Cys-103, Cys-134, Cys-194, and Arg-266.

The protein belongs to the radical SAM superfamily. Biotin synthase family. In terms of assembly, homodimer. It depends on [4Fe-4S] cluster as a cofactor. [2Fe-2S] cluster is required as a cofactor.

The enzyme catalyses (4R,5S)-dethiobiotin + (sulfur carrier)-SH + 2 reduced [2Fe-2S]-[ferredoxin] + 2 S-adenosyl-L-methionine = (sulfur carrier)-H + biotin + 2 5'-deoxyadenosine + 2 L-methionine + 2 oxidized [2Fe-2S]-[ferredoxin]. The protein operates within cofactor biosynthesis; biotin biosynthesis; biotin from 7,8-diaminononanoate: step 2/2. Functionally, catalyzes the conversion of dethiobiotin (DTB) to biotin by the insertion of a sulfur atom into dethiobiotin via a radical-based mechanism. The sequence is that of Biotin synthase from Pseudomonas syringae pv. syringae (strain B728a).